Consider the following 239-residue polypeptide: Pyridoxine 5'-phosphate synthase (239 aa).

A 3-amino-2-oxopropyl phosphate-binding site is contributed by N7. A 1-deoxy-D-xylulose 5-phosphate-binding site is contributed by 9 to 10 (DH). R18 provides a ligand contact to 3-amino-2-oxopropyl phosphate. H43 functions as the Proton acceptor in the catalytic mechanism. Residues R45 and H50 each contribute to the 1-deoxy-D-xylulose 5-phosphate site. The active-site Proton acceptor is the E70. A 1-deoxy-D-xylulose 5-phosphate-binding site is contributed by T100. The active-site Proton donor is the H191. 3-amino-2-oxopropyl phosphate is bound by residues G192 and 213 to 214 (GH).

Belongs to the PNP synthase family. As to quaternary structure, homooctamer; tetramer of dimers.

Its subcellular location is the cytoplasm. It carries out the reaction 3-amino-2-oxopropyl phosphate + 1-deoxy-D-xylulose 5-phosphate = pyridoxine 5'-phosphate + phosphate + 2 H2O + H(+). Its pathway is cofactor biosynthesis; pyridoxine 5'-phosphate biosynthesis; pyridoxine 5'-phosphate from D-erythrose 4-phosphate: step 5/5. Catalyzes the complicated ring closure reaction between the two acyclic compounds 1-deoxy-D-xylulose-5-phosphate (DXP) and 3-amino-2-oxopropyl phosphate (1-amino-acetone-3-phosphate or AAP) to form pyridoxine 5'-phosphate (PNP) and inorganic phosphate. The chain is Pyridoxine 5'-phosphate synthase from Trichormus variabilis (strain ATCC 29413 / PCC 7937) (Anabaena variabilis).